The chain runs to 139 residues: Cytochrome c2 (139 aa).

A signal peptide spans M1 to A25. A Pyrrolidone carboxylic acid modification is found at Q26. Residues C38, C41, H42, and M118 each coordinate heme c.

Belongs to the cytochrome c family. Post-translationally, binds 1 heme c group covalently per subunit.

Functionally, cytochrome c2 is found mainly in purple, non-sulfur, photosynthetic bacteria where it functions as the electron donor to the oxidized bacteriochlorophyll in the photophosphorylation pathway. However, it may also have a role in the respiratory chain and is found in some non-photosynthetic bacteria. This is Cytochrome c2 (cycA) from Rhodopseudomonas palustris (strain ATCC BAA-98 / CGA009).